A 284-amino-acid polypeptide reads, in one-letter code: Pollen allergen Phl p 5b (284 aa).

The first 19 residues, 1–19, serve as a signal peptide directing secretion; sequence AAAAVPRRGPRGGPGRSYT. The segment at 1–21 is disordered; that stretch reads AAAAVPRRGPRGGPGRSYTAD.

It belongs to the Poa p IX/Phl p VI allergen family. Homodimer; disulfide-linked.

Its function is as follows. Has ribonuclease activity. May be involved in host-pathogen interactions. The sequence is that of Pollen allergen Phl p 5b from Phleum pratense (Common timothy).